The chain runs to 478 residues: Hemolysin secretion protein D, plasmid (478 aa).

The Cytoplasmic segment spans residues 1-59 (MKTWLMGFSEFLLRYKLVWSETWKIRKQLDTPVREKDENEFLPAHLELIETPVSRRPRL). A helical; Signal-anchor for type II membrane protein transmembrane segment spans residues 60–80 (VAYFIMGFLVIAFILSVLGQV). The Periplasmic portion of the chain corresponds to 81–478 (EIVATANGKL…ESVTESLRER (398 aa)).

The protein belongs to the membrane fusion protein (MFP) (TC 8.A.1) family.

Its subcellular location is the cell inner membrane. Functionally, involved in the transport of hemolysin A. This Escherichia coli protein is Hemolysin secretion protein D, plasmid (hlyD).